Consider the following 416-residue polypeptide: 5-methylthioadenosine/S-adenosylhomocysteine deaminase 2 (416 aa).

The Zn(2+) site is built by histidine 58 and histidine 60. Substrate is bound by residues glutamate 86 and histidine 178. Histidine 205 is a binding site for Zn(2+). Residues glutamate 208 and aspartate 293 each contribute to the substrate site. Aspartate 293 provides a ligand contact to Zn(2+).

The protein belongs to the metallo-dependent hydrolases superfamily. MTA/SAH deaminase family. The cofactor is Zn(2+).

The enzyme catalyses S-adenosyl-L-homocysteine + H2O + H(+) = S-inosyl-L-homocysteine + NH4(+). It carries out the reaction S-methyl-5'-thioadenosine + H2O + H(+) = S-methyl-5'-thioinosine + NH4(+). Catalyzes the deamination of 5-methylthioadenosine and S-adenosyl-L-homocysteine into 5-methylthioinosine and S-inosyl-L-homocysteine, respectively. Is also able to deaminate adenosine. The sequence is that of 5-methylthioadenosine/S-adenosylhomocysteine deaminase 2 from Archaeoglobus fulgidus (strain ATCC 49558 / DSM 4304 / JCM 9628 / NBRC 100126 / VC-16).